The chain runs to 344 residues: Cyclin-dependent kinase 20 (344 aa).

One can recognise a Protein kinase domain in the interval 4 to 288; that stretch reads YSILGRIGEG…ARQALLHPYF (285 aa). Residues 10–18 and Lys-33 each bind ATP; that span reads IGEGAHGIV. Asp-127 (proton acceptor) is an active-site residue.

Belongs to the protein kinase superfamily. CMGC Ser/Thr protein kinase family. CDC2/CDKX subfamily. Monomer. Interacts with tbc1d32.

It is found in the nucleus. The protein localises to the cytoplasm. The protein resides in the cell projection. It localises to the cilium. It catalyses the reaction L-seryl-[protein] + ATP = O-phospho-L-seryl-[protein] + ADP + H(+). It carries out the reaction L-threonyl-[protein] + ATP = O-phospho-L-threonyl-[protein] + ADP + H(+). Its function is as follows. Involved in cell growth. Activates cdk2, a kinase involved in the control of the cell cycle, by phosphorylating residue 'Thr-160'. Required for high-level Shh responses in the developing neural tube. Together with tbc1d32, controls the structure of the primary cilium by coordinating assembly of the ciliary membrane and axoneme, allowing gli2 to be properly activated in response to SHH signaling. In Danio rerio (Zebrafish), this protein is Cyclin-dependent kinase 20 (cdk20).